The following is a 590-amino-acid chain: Phenylalanine--tRNA ligase beta subunit (590 aa).

The B5 domain maps to 276 to 382 (MELDVWDVPV…IMYNYDRFEP (107 aa)). 4 residues coordinate Mg(2+): Asn-360, Asp-366, Glu-369, and Asp-370.

This sequence belongs to the phenylalanyl-tRNA synthetase beta subunit family. Type 2 subfamily. In terms of assembly, tetramer of two alpha and two beta subunits. Mg(2+) is required as a cofactor.

It localises to the cytoplasm. The enzyme catalyses tRNA(Phe) + L-phenylalanine + ATP = L-phenylalanyl-tRNA(Phe) + AMP + diphosphate + H(+). This chain is Phenylalanine--tRNA ligase beta subunit, found in Methanopyrus kandleri (strain AV19 / DSM 6324 / JCM 9639 / NBRC 100938).